A 1001-amino-acid chain; its full sequence is O-GlcNAcase NagJ (1001 aa).

Positions 1 to 30 (MKRKMLKRLLTSAFACMFIANGLITTTVRA) are cleaved as a signal peptide. The interval 179-469 (VSARGIVEGF…WNRAIDMLYG (291 aa)) is catalytic domain. The 273-residue stretch at 180 to 452 (SARGIVEGFY…TAADYSWNMD (273 aa)) folds into the GH84 domain. Positions 187, 218, and 297 each coordinate a protein. D298 functions as the Proton donor in the catalytic mechanism. Residues Y335, 394 to 396 (WWN), D401, and N429 contribute to the a protein site. Coiled-coil stretches lie at residues 515 to 543 (KEDA…KANL) and 573 to 597 (VAQL…LNTA). The Fibronectin type-III domain occupies 916-1001 (PVRDFKASEI…KESLTLRTAR (86 aa)).

The protein belongs to the glycosyl hydrolase 84 family.

It catalyses the reaction 3-O-(N-acetyl-beta-D-glucosaminyl)-L-seryl-[protein] + H2O = N-acetyl-D-glucosamine + L-seryl-[protein]. The catalysed reaction is 3-O-(N-acetyl-beta-D-glucosaminyl)-L-threonyl-[protein] + H2O = L-threonyl-[protein] + N-acetyl-D-glucosamine. Inhibited by O-(2-acetamido-2-deoxy-D-glucopyranosylidene)amino-N-phenyl-carbamate (PUGNAc) and streptozotocin. Binds carbohydrates. Capable of hydrolyzing the glycosidic link of O-GlcNAcylated proteins. Can bind and deglycosylate O-glycosylated peptides from mammals. The polypeptide is O-GlcNAcase NagJ (nagJ) (Clostridium perfringens (strain ATCC 13124 / DSM 756 / JCM 1290 / NCIMB 6125 / NCTC 8237 / Type A)).